The following is a 135-amino-acid chain: Small ribosomal subunit protein uS12 (135 aa).

3-methylthioaspartic acid is present on aspartate 89. Positions 106-135 (GVANRRQSRSKYGAKRPKAGAAQATKGGKK) are disordered. Basic residues predominate over residues 111–123 (RQSRSKYGAKRPK). The span at 124-135 (AGAAQATKGGKK) shows a compositional bias: low complexity.

The protein belongs to the universal ribosomal protein uS12 family. Part of the 30S ribosomal subunit. Contacts proteins S8 and S17. May interact with IF1 in the 30S initiation complex.

Functionally, with S4 and S5 plays an important role in translational accuracy. Its function is as follows. Interacts with and stabilizes bases of the 16S rRNA that are involved in tRNA selection in the A site and with the mRNA backbone. Located at the interface of the 30S and 50S subunits, it traverses the body of the 30S subunit contacting proteins on the other side and probably holding the rRNA structure together. The combined cluster of proteins S8, S12 and S17 appears to hold together the shoulder and platform of the 30S subunit. The polypeptide is Small ribosomal subunit protein uS12 (Hydrogenobaculum sp. (strain Y04AAS1)).